We begin with the raw amino-acid sequence, 534 residues long: MTKYIFVTGGVVSSIGKGIVAASLGRLLKNRGLKVTIQKFDPYINIDPGTMSPYQHGEVYVTDDGAETDLDLGHYERFIDINLNKYSNVTTGKIYSEVLRKERKGEYLGATVQVIPHITDALKDKIKRAATTTDSDVVITEVGGTVGDIESLPFLEALRQMKADVGSDNVMYIHTTLLPYLKAAGEMKTKPTQHSVKELRGLGIQPNMLVIRTEEPAGQGIKNKLAQFCDVAPEAVIESLDVEHIYQVPLNMQAQGMDQIVCDHLKLNAPAADMTEWSAMVDKVLNLKKTTKIALVGKYVELHDAYLSVVEALKHSGLANDTAIDIDWVNANDLTAENVASRLADADGIIVPGGFGQRGTEGKIQAIRYARENDVPMLGVCLGMQLTCIEFARHVLHLDGANSAELDPETQYPIIDIMRDQIDIEDMGGTLRLGLYPCKLKPGSKAAAAYGNQEVVQRRHRHRYEFNTKFREQFEAEGFVFSGVSPDNRLMEVVELPDKKFFVAAQYHPEYHSRPNHAEELYSAFVTAAVENAK.

The tract at residues 1–267 (MTKYIFVTGG…DQIVCDHLKL (267 aa)) is amidoligase domain. CTP is bound at residue Ser-13. Position 13 (Ser-13) interacts with UTP. 14 to 19 (SIGKGI) contacts ATP. L-glutamine is bound at residue Tyr-54. Residue Asp-71 coordinates ATP. Residues Asp-71 and Glu-141 each coordinate Mg(2+). CTP-binding positions include 148–150 (DIE), 188–193 (KTKPTQ), and Lys-224. Residues 188–193 (KTKPTQ) and Lys-224 contribute to the UTP site. Residues 292 to 534 (KIALVGKYVE…FVTAAVENAK (243 aa)) form the Glutamine amidotransferase type-1 domain. Gly-354 is an L-glutamine binding site. The active-site Nucleophile; for glutamine hydrolysis is the Cys-381. L-glutamine is bound by residues 382-385 (LGMQ), Glu-405, and Arg-463. Active-site residues include His-508 and Glu-510.

This sequence belongs to the CTP synthase family. Homotetramer.

The catalysed reaction is UTP + L-glutamine + ATP + H2O = CTP + L-glutamate + ADP + phosphate + 2 H(+). It catalyses the reaction L-glutamine + H2O = L-glutamate + NH4(+). It carries out the reaction UTP + NH4(+) + ATP = CTP + ADP + phosphate + 2 H(+). Its pathway is pyrimidine metabolism; CTP biosynthesis via de novo pathway; CTP from UDP: step 2/2. Allosterically activated by GTP, when glutamine is the substrate; GTP has no effect on the reaction when ammonia is the substrate. The allosteric effector GTP functions by stabilizing the protein conformation that binds the tetrahedral intermediate(s) formed during glutamine hydrolysis. Inhibited by the product CTP, via allosteric rather than competitive inhibition. Its function is as follows. Catalyzes the ATP-dependent amination of UTP to CTP with either L-glutamine or ammonia as the source of nitrogen. Regulates intracellular CTP levels through interactions with the four ribonucleotide triphosphates. This chain is CTP synthase, found in Streptococcus thermophilus (strain ATCC BAA-250 / LMG 18311).